The chain runs to 349 residues: GTP 3',8-cyclase (349 aa).

The Radical SAM core domain maps to 24–250 (PFGRAVTYLR…DIPYRTGGPA (227 aa)). Position 33 (Arg33) interacts with GTP. Residues Cys40 and Cys44 each contribute to the [4Fe-4S] cluster site. Tyr46 serves as a coordination point for S-adenosyl-L-methionine. Cys47 provides a ligand contact to [4Fe-4S] cluster. Position 82 (Arg82) interacts with GTP. Gly86 contributes to the S-adenosyl-L-methionine binding site. A GTP-binding site is contributed by Thr116. Residue Ser140 coordinates S-adenosyl-L-methionine. Lys176 is a GTP binding site. Met210 is a binding site for S-adenosyl-L-methionine. The [4Fe-4S] cluster site is built by Cys273 and Cys276. Residue 278–280 (RVR) participates in GTP binding. A [4Fe-4S] cluster-binding site is contributed by Cys290.

The protein belongs to the radical SAM superfamily. MoaA family. As to quaternary structure, monomer and homodimer. [4Fe-4S] cluster serves as cofactor.

It carries out the reaction GTP + AH2 + S-adenosyl-L-methionine = (8S)-3',8-cyclo-7,8-dihydroguanosine 5'-triphosphate + 5'-deoxyadenosine + L-methionine + A + H(+). It participates in cofactor biosynthesis; molybdopterin biosynthesis. Catalyzes the cyclization of GTP to (8S)-3',8-cyclo-7,8-dihydroguanosine 5'-triphosphate. The sequence is that of GTP 3',8-cyclase from Rhizobium meliloti (strain 1021) (Ensifer meliloti).